Consider the following 207-residue polypeptide: Ribosomal RNA small subunit methyltransferase G (207 aa).

S-adenosyl-L-methionine-binding positions include G75, L80, V126–E127, and R141.

It belongs to the methyltransferase superfamily. RNA methyltransferase RsmG family.

The protein localises to the cytoplasm. It carries out the reaction guanosine(527) in 16S rRNA + S-adenosyl-L-methionine = N(7)-methylguanosine(527) in 16S rRNA + S-adenosyl-L-homocysteine. Functionally, specifically methylates the N7 position of guanine in position 527 of 16S rRNA. This Psychromonas ingrahamii (strain DSM 17664 / CCUG 51855 / 37) protein is Ribosomal RNA small subunit methyltransferase G.